The chain runs to 129 residues: Small ribosomal subunit protein uS11 (129 aa).

Belongs to the universal ribosomal protein uS11 family. In terms of assembly, part of the 30S ribosomal subunit. Interacts with proteins S7 and S18. Binds to IF-3.

Functionally, located on the platform of the 30S subunit, it bridges several disparate RNA helices of the 16S rRNA. Forms part of the Shine-Dalgarno cleft in the 70S ribosome. This Novosphingobium aromaticivorans (strain ATCC 700278 / DSM 12444 / CCUG 56034 / CIP 105152 / NBRC 16084 / F199) protein is Small ribosomal subunit protein uS11.